The following is a 155-amino-acid chain: Transcriptional repressor NrdR (155 aa).

A zinc finger lies at 3 to 34 (CPFCGNIDTQVKDSRPAEDHVSIRRRRFCPAC). Positions 49–139 (LVVIKSSGKR…VYKNFQAADD (91 aa)) constitute an ATP-cone domain.

Belongs to the NrdR family. Requires Zn(2+) as cofactor.

Functionally, negatively regulates transcription of bacterial ribonucleotide reductase nrd genes and operons by binding to NrdR-boxes. In Cereibacter sphaeroides (strain ATCC 17029 / ATH 2.4.9) (Rhodobacter sphaeroides), this protein is Transcriptional repressor NrdR.